Reading from the N-terminus, the 941-residue chain is Cilia- and flagella-associated protein 69 (941 aa).

It localises to the cell projection. The protein localises to the cilium. It is found in the flagellum. Functionally, cilium- and flagellum-associated protein. In the olfactory epithelium, regulates the speed of activation and termination of the odor response and thus contributes to the robustness of olfactory transduction pathways. Required for sperm flagellum assembly and stability. The protein is Cilia- and flagella-associated protein 69 of Callithrix jacchus (White-tufted-ear marmoset).